Reading from the N-terminus, the 620-residue chain is 1-deoxy-D-xylulose-5-phosphate synthase (620 aa).

Thiamine diphosphate contacts are provided by residues histidine 80 and 121-123 (GHS). Aspartate 152 is a Mg(2+) binding site. Thiamine diphosphate-binding positions include 153–154 (GA), asparagine 181, tyrosine 288, and glutamate 370. Asparagine 181 provides a ligand contact to Mg(2+).

This sequence belongs to the transketolase family. DXPS subfamily. As to quaternary structure, homodimer. The cofactor is Mg(2+). Thiamine diphosphate is required as a cofactor.

It catalyses the reaction D-glyceraldehyde 3-phosphate + pyruvate + H(+) = 1-deoxy-D-xylulose 5-phosphate + CO2. The protein operates within metabolic intermediate biosynthesis; 1-deoxy-D-xylulose 5-phosphate biosynthesis; 1-deoxy-D-xylulose 5-phosphate from D-glyceraldehyde 3-phosphate and pyruvate: step 1/1. Functionally, catalyzes the acyloin condensation reaction between C atoms 2 and 3 of pyruvate and glyceraldehyde 3-phosphate to yield 1-deoxy-D-xylulose-5-phosphate (DXP). The protein is 1-deoxy-D-xylulose-5-phosphate synthase of Salmonella typhi.